Here is a 500-residue protein sequence, read N- to C-terminus: DNA polymerase processivity factor (500 aa).

A disordered region spans residues 388–500 (VSESDDAAAE…QEPANKRGKR (113 aa)). Residues 438–449 (TLQQSAQPSSPA) are compositionally biased toward polar residues.

The protein belongs to the herpesviridae DNA polymerase processivity factor family. In terms of assembly, interacts with the DNA polymerase catalytic subunit UL30. Interacts with the origin-binding protein.

It localises to the host nucleus. Its function is as follows. Plays an essential role in viral DNA replication by acting as the polymerase accessory subunit. Associates with the viral polymerase to increase its processivity and forms high-affinity direct interactions with DNA. Facilitates the origin-binding protein UL9 loading onto DNA thus increasing its ability to assemble into a functional complex capable of unwinding duplex DNA. This Amazona oratrix (yellow-headed parrot) protein is DNA polymerase processivity factor (UL42).